The sequence spans 225 residues: uncharacterized protein (225 aa).

A divalent metal cation is bound by residues Glu-69, Glu-71, and Asp-100.

The protein belongs to the FAH family.

This is an uncharacterized protein from Pyrococcus abyssi (strain GE5 / Orsay).